We begin with the raw amino-acid sequence, 149 residues long: Large ribosomal subunit protein uL13 (149 aa).

The protein belongs to the universal ribosomal protein uL13 family. As to quaternary structure, part of the 50S ribosomal subunit.

Functionally, this protein is one of the early assembly proteins of the 50S ribosomal subunit, although it is not seen to bind rRNA by itself. It is important during the early stages of 50S assembly. This Borrelia hermsii (strain HS1 / DAH) protein is Large ribosomal subunit protein uL13.